An 84-amino-acid chain; its full sequence is Cytochrome b559 subunit alpha (84 aa).

A helical membrane pass occupies residues 24-38 (IIHAVTLPAIFIAGF). His26 is a binding site for heme.

Belongs to the PsbE/PsbF family. As to quaternary structure, heterodimer of an alpha subunit and a beta subunit. PSII is composed of 1 copy each of membrane proteins PsbA, PsbB, PsbC, PsbD, PsbE, PsbF, PsbH, PsbI, PsbJ, PsbK, PsbL, PsbM, PsbT, PsbX, PsbY, Psb30/Ycf12, peripheral proteins PsbO, CyanoQ (PsbQ), PsbU, PsbV and a large number of cofactors. It forms dimeric complexes. It depends on heme b as a cofactor.

The protein resides in the cellular thylakoid membrane. Its function is as follows. This b-type cytochrome is tightly associated with the reaction center of photosystem II (PSII). PSII is a light-driven water:plastoquinone oxidoreductase that uses light energy to abstract electrons from H(2)O, generating O(2) and a proton gradient subsequently used for ATP formation. It consists of a core antenna complex that captures photons, and an electron transfer chain that converts photonic excitation into a charge separation. This is Cytochrome b559 subunit alpha from Prochlorococcus marinus (strain MIT 9301).